The primary structure comprises 279 residues: Pantothenate synthetase (279 aa).

30–37 (MGALHAGH) contributes to the ATP binding site. The active-site Proton donor is His37. Gln61 provides a ligand contact to (R)-pantoate. Gln61 is a binding site for beta-alanine. 147–150 (GEKD) serves as a coordination point for ATP. Residue Gln153 participates in (R)-pantoate binding. ATP is bound by residues Ala176 and 184-187 (LSSR).

This sequence belongs to the pantothenate synthetase family. Homodimer.

The protein resides in the cytoplasm. The enzyme catalyses (R)-pantoate + beta-alanine + ATP = (R)-pantothenate + AMP + diphosphate + H(+). It participates in cofactor biosynthesis; (R)-pantothenate biosynthesis; (R)-pantothenate from (R)-pantoate and beta-alanine: step 1/1. Catalyzes the condensation of pantoate with beta-alanine in an ATP-dependent reaction via a pantoyl-adenylate intermediate. The sequence is that of Pantothenate synthetase from Sphingopyxis alaskensis (strain DSM 13593 / LMG 18877 / RB2256) (Sphingomonas alaskensis).